The following is a 318-amino-acid chain: Triplex capsid protein 2 (318 aa).

It belongs to the herpesviridae TRX2 protein family. In terms of assembly, interacts with TRX1 and major capisd protein/MCP.

The protein resides in the virion. Its subcellular location is the host nucleus. Its function is as follows. Structural component of the T=16 icosahedral capsid. The capsid is composed of pentamers and hexamers of major capsid protein/MCP, which are linked together by heterotrimers called triplexes. These triplexes are formed by a single molecule of triplex protein 1/TRX1 and two copies of triplex protein 2/TRX2. Additionally, TRX1 is required for efficient transport of TRX2 to the nucleus, which is the site of capsid assembly. The polypeptide is Triplex capsid protein 2 (Human herpesvirus 2 (strain HG52) (HHV-2)).